Reading from the N-terminus, the 600-residue chain is NADPH-dependent diflavin oxidoreductase 1 (600 aa).

The 145-residue stretch at 6 to 150 (LLILYGSQTG…VVDPWLKDLW (145 aa)) folds into the Flavodoxin-like domain. FMN is bound by residues 12 to 17 (SQTGTA), 59 to 62 (ATTG), 97 to 106 (LGDSSYPKFN), and aspartate 132. Residues 210-449 (IHPFLAPVLS…WVKKGSMKFP (240 aa)) enclose the FAD-binding FR-type domain. FAD-binding positions include arginine 354, 386 to 389 (RAFS), and 420 to 423 (GLCS). NADP(+) contacts are provided by residues threonine 463, 518 to 519 (SR), and 524 to 528 (KIYVQ). Residue tryptophan 599 coordinates FAD.

It belongs to the NADPH-dependent diflavin oxidoreductase NDOR1 family. The protein in the N-terminal section; belongs to the flavodoxin family. This sequence in the C-terminal section; belongs to the flavoprotein pyridine nucleotide cytochrome reductase family. As to quaternary structure, interacts with ciapin1; as part of the cytosolic iron-sulfur (Fe-S) protein assembly (CIA) machinery. FAD is required as a cofactor. The cofactor is FMN.

Its subcellular location is the cytoplasm. The protein resides in the perinuclear region. It catalyses the reaction 2 oxidized [2Fe-2S]-[protein] + NADPH = 2 reduced [2Fe-2S]-[protein] + NADP(+) + H(+). In terms of biological role, NADPH-dependent reductase which is a central component of the cytosolic iron-sulfur (Fe-S) protein assembly (CIA) machinery. Transfers electrons from NADPH via its FAD and FMN prosthetic groups to the [2Fe-2S] cluster of ciapin1, another key component of the CIA machinery. In turn, this reduced cluster provides electrons for assembly of cytosolic iron-sulfur cluster proteins. It can also reduce the [2Fe-2S] cluster of cisd1 and activate this protein implicated in Fe/S cluster repair. The sequence is that of NADPH-dependent diflavin oxidoreductase 1 from Xenopus laevis (African clawed frog).